The primary structure comprises 336 residues: Mitochondrial thiamine diphosphate carrier 2 (336 aa).

6 consecutive transmembrane segments (helical) span residues 11–27 (RRAL…GGIS), 88–105 (VPAL…FTVL), 127–150 (YLSY…FDLL), 182–199 (LYSG…YAGL), 230–246 (SVSS…AGTF), and 303–322 (GLFP…FVAY). 3 Solcar repeats span residues 11–111 (RRAL…LKTF), 124–210 (LSPY…FKRS), and 231–328 (VSSF…ISDW).

The protein belongs to the mitochondrial carrier (TC 2.A.29) family. As to expression, ubiquitous.

Its subcellular location is the mitochondrion inner membrane. Its function is as follows. Mitochondrial transporter that mediates uptake of thiamine diphosphate (ThDP) into mitochondria. In Zea mays (Maize), this protein is Mitochondrial thiamine diphosphate carrier 2.